Reading from the N-terminus, the 439-residue chain is Homeobox protein ceh-32 (439 aa).

The segment at residues 183–243 (WDGEQKTHCF…KNRRQRDRAA (61 aa)) is a DNA-binding region (homeobox). 3 disordered regions span residues 253 to 293 (GVEL…SHIP), 344 to 365 (EEEN…KKRS), and 379 to 439 (VSPS…SQSE). Acidic residues-rich tracts occupy residues 264–274 (SDSDDDFEDSM) and 344–358 (EEEN…EADI). Polar residues predominate over residues 379–392 (VSPSQCSPCSNESL). The segment covering 398–428 (VKTEEVKKEDDEAAEEDSRSVKSETSEDPKH) has biased composition (basic and acidic residues).

Belongs to the SIX/Sine oculis homeobox family. In terms of assembly, interacts with gmn-1. As to expression, expressed in the posterior gonad. Expressed in some cells in the head that are probably neurons. Expressed in the dorsal and ventral neuron RMD pair and the inner labial neuron class IL1. Not expressed in BAG neurons.

Its subcellular location is the nucleus. Transcription factor which binds a motif with the core sequence 5'-GTATCA-3'. Plays a role in head morphogenesis. Involved in embryonic development. Required for cell specification of the RIA interneurons. May cooperate with the transcription factor vab-3 and phosphatase eya-1 to repress transcription factor ets-5 expression in non BAG neuronal cells. This is Homeobox protein ceh-32 from Caenorhabditis elegans.